The following is a 751-amino-acid chain: Methionine--tRNA ligase, cytoplasmic (751 aa).

Position 2 is an N-acetylserine (S2). The interval 36-92 (LKPEVDNDNAAMELRNTKEPFLLFDANAILRYVMDDFEGQTSDKYQFALASLQNLLY) is interaction with ARC1. The 'HIGH' region signature appears at 205-215 (PYVNNVPHLGN). K411 lines the ATP pocket. The 'KMSKS' region motif lies at 525–529 (KFSKS).

Belongs to the class-I aminoacyl-tRNA synthetase family. Component of a yeast aminoacyl-tRNA synthase (aaRS) complex formed by methionyl-tRNA synthase MES1, glutamyl-tRNA synthase GUS1 and the tRNA aminoacylation cofactor ARC1 in a stoichiometric complex. Interacts (via N-ter) with ARC1 (via N-ter). Can also form a stable binary complex with ARC1 that is functional in terms of aminoacylation. ARC1 increases the affinity for cognate tRNAs due to the presence of a tRNA binding domain in the middle and C-terminal part of ARC1.

Its subcellular location is the cytoplasm. The enzyme catalyses tRNA(Met) + L-methionine + ATP = L-methionyl-tRNA(Met) + AMP + diphosphate. Its function is as follows. Catalyzes the attachment of methionine to tRNA(Met) in a two-step reaction: methionine is first activated by ATP to form Met-AMP and then transferred to the acceptor end of tRNA(Met). In Saccharomyces cerevisiae (strain ATCC 204508 / S288c) (Baker's yeast), this protein is Methionine--tRNA ligase, cytoplasmic (MES1).